Reading from the N-terminus, the 225-residue chain is Uracil-DNA glycosylase (225 aa).

Catalysis depends on Asp-65, which acts as the Proton acceptor.

Belongs to the uracil-DNA glycosylase (UDG) superfamily. UNG family.

The protein localises to the cytoplasm. The catalysed reaction is Hydrolyzes single-stranded DNA or mismatched double-stranded DNA and polynucleotides, releasing free uracil.. In terms of biological role, excises uracil residues from the DNA which can arise as a result of misincorporation of dUMP residues by DNA polymerase or due to deamination of cytosine. This Lysinibacillus sphaericus (strain C3-41) protein is Uracil-DNA glycosylase.